A 45-amino-acid polypeptide reads, in one-letter code: Large ribosomal subunit protein bL34 (45 aa).

Residues 1–20 show a composition bias toward basic residues; it reads MSKRTYQPNKRKRLKTHGFR. Residues 1–45 form a disordered region; that stretch reads MSKRTYQPNKRKRLKTHGFRSRMSTASGRRIISCRRRKNRETLTA.

The protein belongs to the bacterial ribosomal protein bL34 family.

This Tropheryma whipplei (strain Twist) (Whipple's bacillus) protein is Large ribosomal subunit protein bL34.